The chain runs to 104 residues: Pyrimidine/purine nucleoside phosphorylase (104 aa).

The protein belongs to the nucleoside phosphorylase PpnP family.

It catalyses the reaction a purine D-ribonucleoside + phosphate = a purine nucleobase + alpha-D-ribose 1-phosphate. The catalysed reaction is adenosine + phosphate = alpha-D-ribose 1-phosphate + adenine. It carries out the reaction cytidine + phosphate = cytosine + alpha-D-ribose 1-phosphate. The enzyme catalyses guanosine + phosphate = alpha-D-ribose 1-phosphate + guanine. It catalyses the reaction inosine + phosphate = alpha-D-ribose 1-phosphate + hypoxanthine. The catalysed reaction is thymidine + phosphate = 2-deoxy-alpha-D-ribose 1-phosphate + thymine. It carries out the reaction uridine + phosphate = alpha-D-ribose 1-phosphate + uracil. The enzyme catalyses xanthosine + phosphate = alpha-D-ribose 1-phosphate + xanthine. Functionally, catalyzes the phosphorolysis of diverse nucleosides, yielding D-ribose 1-phosphate and the respective free bases. Can use uridine, adenosine, guanosine, cytidine, thymidine, inosine and xanthosine as substrates. Also catalyzes the reverse reactions. The polypeptide is Pyrimidine/purine nucleoside phosphorylase (Leptospira borgpetersenii serovar Hardjo-bovis (strain L550)).